A 420-amino-acid polypeptide reads, in one-letter code: Ammonium transporter Amt2 (420 aa).

11 helical membrane passes run 34–54, 71–91, 120–140, 149–169, 180–200, 220–240, 250–270, 273–293, 295–315, 339–359, and 365–385; these read VFFL…FAML, NMVD…ILCS, SWFF…GGVA, VLIS…LGPW, AGSL…IAAL, IPMA…FNVG, GLVC…ALIA, NDVL…CSGT, VVSP…VPIV, VIGA…AGGV, and IIGA…LAKI.

Belongs to the ammonia transporter channel (TC 1.A.11.2) family. As to quaternary structure, homotrimer. Interacts and forms a complex with GlnK2.

The protein resides in the cell membrane. In terms of biological role, involved in the uptake of ammonium/ammonia (NH(4)(+)/NH(3)). Transport is electrogenic. The polypeptide is Ammonium transporter Amt2 (Methanocaldococcus jannaschii (strain ATCC 43067 / DSM 2661 / JAL-1 / JCM 10045 / NBRC 100440) (Methanococcus jannaschii)).